The sequence spans 1253 residues: Cytoplasmic FMR1-interacting protein 1 (1253 aa).

Position 583 is a phosphoserine (serine 583). At threonine 1234 the chain carries Phosphothreonine.

It belongs to the CYFIP family. Component of the WAVE1 complex composed of ABI2, CYFIP1 or CYFIP2, BRK1, NCKAP1 and WASF1/WAVE1. Within the complex, a heterodimer containing NCKAP1 and CYFIP1 interacts with a heterotrimer formed by WAVE1, ABI2 and BRK1. Component of the CYFIP1-EIF4E-FMR1 complex which is composed of CYFIP, EIF4E and FMR1. Interacts with FMR1 but does not bind to related proteins FXR1 or FXR2. Interaction with EIF4E stimulates FMR1 binding. Component of the WAVE2 complex composed of ABI1, CYFIP1/SRA1, NCKAP1/NAP1 (NCKAP1l/HEM1 in hematopoietic cells) and WASF2/WAVE2. Interacts with the active GTP-bound form of RAC1. Interacts through its C-terminus with the C-terminus of DPYSL2/CRMP2 which is necessary for DPYSL2-induced axon outgrowth. Interacts with NYAP1, NYAP2 and MYO16. Interacts with TMEM108 (via N-terminus); the interaction associates TMEM108 with the WAVE1 complex.

It localises to the cytoplasm. The protein resides in the perinuclear region. Its subcellular location is the cell projection. It is found in the lamellipodium. The protein localises to the ruffle. It localises to the synapse. The protein resides in the synaptosome. Component of the CYFIP1-EIF4E-FMR1 complex which binds to the mRNA cap and mediates translational repression. In the CYFIP1-EIF4E-FMR1 complex this subunit is an adapter between EIF4E and FMR1. Promotes the translation repression activity of FMR1 in brain probably by mediating its association with EIF4E and mRNA. Regulates formation of membrane ruffles and lamellipodia. Plays a role in axon outgrowth. Binds to F-actin but not to RNA. Part of the WAVE complex that regulates actin filament reorganization via its interaction with the Arp2/3 complex. Actin remodeling activity is regulated by RAC1. Regulator of epithelial morphogenesis. As component of the WAVE1 complex, required for BDNF-NTRK2 endocytic trafficking and signaling from early endosomes. May act as an invasion suppressor in cancers. The protein is Cytoplasmic FMR1-interacting protein 1 of Homo sapiens (Human).